Consider the following 319-residue polypeptide: tRNA-cytidine(32) 2-sulfurtransferase (319 aa).

A PP-loop motif motif is present at residues 49 to 54; it reads SGGKDS. [4Fe-4S] cluster is bound by residues Cys124, Cys127, and Cys215. Residues 276 to 319 are disordered; it reads DGDTAFDKEEFRDPAPDADDVEDAPKKRTISILDSRGKESGCGA. 2 stretches are compositionally biased toward basic and acidic residues: residues 280-290 and 310-319; these read AFDKEEFRDPA and SRGKESGCGA.

This sequence belongs to the TtcA family. In terms of assembly, homodimer. Mg(2+) serves as cofactor. The cofactor is [4Fe-4S] cluster.

Its subcellular location is the cytoplasm. It catalyses the reaction cytidine(32) in tRNA + S-sulfanyl-L-cysteinyl-[cysteine desulfurase] + AH2 + ATP = 2-thiocytidine(32) in tRNA + L-cysteinyl-[cysteine desulfurase] + A + AMP + diphosphate + H(+). Its pathway is tRNA modification. Catalyzes the ATP-dependent 2-thiolation of cytidine in position 32 of tRNA, to form 2-thiocytidine (s(2)C32). The sulfur atoms are provided by the cysteine/cysteine desulfurase (IscS) system. The sequence is that of tRNA-cytidine(32) 2-sulfurtransferase from Chromobacterium violaceum (strain ATCC 12472 / DSM 30191 / JCM 1249 / CCUG 213 / NBRC 12614 / NCIMB 9131 / NCTC 9757 / MK).